The following is a 158-amino-acid chain: Anaerobic nitrite reductase AHB2 (158 aa).

Residues 5 to 154 (GFTEKQEALV…LALAIKTEMK (150 aa)) form the Globin domain. A Homodimerization motif is present at residues 38 to 42 (EIAPA). Heme b-binding residues include Ser-48, Lys-62, His-66, and His-101. The Homodimerization signature appears at 108-120 (DPHFEVVKEALLR).

Belongs to the plant globin family. Unable to dimerize. Requires heme b as cofactor. As to expression, expressed in rosette leaves but not in roots.

Its subcellular location is the cytoplasm. It is found in the nucleus. The enzyme catalyses Fe(III)-heme b-[protein] + nitric oxide + H2O = Fe(II)-heme b-[protein] + nitrite + 2 H(+). Phytoglobin that reduces nitrite to nitric oxide (NO) under anoxic conditions (e.g. during flooding or in waterlogged soil). May not function as an oxygen storage or transport protein. Has an unusually high affinity for O(2) through an hexacoordinate heme iron because of a very low dissociation constant. The protein is Anaerobic nitrite reductase AHB2 of Arabidopsis thaliana (Mouse-ear cress).